A 230-amino-acid polypeptide reads, in one-letter code: CDP-diacylglycerol--inositol 3-phosphatidyltransferase (230 aa).

Residues 1–28 lie on the Cytoplasmic side of the membrane; sequence MPSAKSSDLSPTKTNLESTTKQKVSVQD. A helical transmembrane segment spans residues 29-51; the sequence is IFLYIPNLIGYLRIITAIISFLC. Over 52-57 the chain is Lumenal; it reads MANHPV. Residues 58–77 traverse the membrane as a helical segment; it reads ATLIFYGISGFLDAFDGYAA. Mg(2+) contacts are provided by Asp70 and Asp73. The a CDP-1,2-diacyl-sn-glycerol site is built by Gly74, Arg78, and Thr84. Topologically, residues 78-89 are cytoplasmic; sequence RKFNQGTRFGAV. The chain crosses the membrane as a helical span at residues 90–110; sequence LDMVTDRCATSSLIVYLGVLY. The Mg(2+) site is built by Asp91 and Asp95. Asp95 serves as the catalytic Proton acceptor. Over 111–112 the chain is Lumenal; it reads PQ. A helical transmembrane segment spans residues 113–133; sequence YTVFWQILVSLDLSSHYMHMY. The Cytoplasmic segment spans residues 134-161; it reads AMLSAGSTSHKNVDETQSKLLSLYYNNR. The chain crosses the membrane as a helical span at residues 162 to 182; that stretch reads LVLFFVCLINELFYMAVYLHY. At 183–184 the chain is on the lumenal side; that stretch reads YK. A helical transmembrane segment spans residues 185-205; the sequence is FFWLGTVMLVASTPIWLFKQI. Topologically, residues 206 to 230 are cytoplasmic; it reads ANIIQLKNASLILARMDAHDHSKRD.

The protein belongs to the CDP-alcohol phosphatidyltransferase class-I family. Mn(2+) is required as a cofactor. Mg(2+) serves as cofactor.

Its subcellular location is the endoplasmic reticulum membrane. It carries out the reaction a CDP-1,2-diacyl-sn-glycerol + myo-inositol = a 1,2-diacyl-sn-glycero-3-phospho-(1D-myo-inositol) + CMP + H(+). With respect to regulation, inhibited by calcium and zinc ions. Inhibited by nucleoside triphosphates and diphosphates. Its function is as follows. Catalyzes the synthesis of phosphatidylinositol (PtdIns). Required for proper membrane dynamics and cell wall integrity. The chain is CDP-diacylglycerol--inositol 3-phosphatidyltransferase from Candida albicans (strain SC5314 / ATCC MYA-2876) (Yeast).